The following is a 487-amino-acid chain: WD-40 repeat-containing protein MSI5 (487 aa).

Residue Met-1 is modified to N-acetylmethionine. Over residues 1 to 12 (MESEAAATVQAT) the composition is skewed to low complexity. Residues 1 to 44 (MESEAAATVQATRPRRAPRTPVTAILTDKRRRKPKSNNESQLPF) form a disordered region. The Nuclear localization signal motif lies at 14–21 (PRRAPRTP). WD repeat units follow at residues 142-182 (IHPG…DRYA), 197-237 (GHQD…TMAG), 270-310 (GHKD…SPAM), 315-355 (AHDA…SNGV), 364-404 (GHRA…KKSE), and 419-466 (GHRD…YRPE). The interval 236–268 (AGSDSKSPGSSFKQTGEGSDKTGGPSVGPRGIY) is disordered. The span at 237 to 252 (GSDSKSPGSSFKQTGE) shows a compositional bias: polar residues. A DWD box motif is present at residues 288–303 (FCSVGDDSCLMLWDAR).

The protein belongs to the WD repeat RBAP46/RBAP48/MSI1 family. Interacts with AHL16. Interacts with LHP1, PDP2, PDP3 and PDP6. Component of the PRC2 (polycomb repressive complex 2) complex which regulates histone methylation on histone H3K27.

The protein localises to the nucleus. Functionally, core histone-binding subunit that may target chromatin assembly factors, chromatin remodeling factors and histone deacetylases to their histone substrates in a manner that is regulated by nucleosomal DNA. Acts together with PDP1 and MSI4/FVE to regulate the function of the PRC2 complex on FLC. This Arabidopsis thaliana (Mouse-ear cress) protein is WD-40 repeat-containing protein MSI5.